A 306-amino-acid polypeptide reads, in one-letter code: Palmitoyl-protein thioesterase 1 (306 aa).

A signal peptide spans 1-27 (MASPSCLWLLAVALLPWTCAARALHHL). 3 cysteine pairs are disulfide-bonded: Cys45-Cys46, Cys96-Cys128, and Cys152-Cys160. Ser115 is a catalytic residue. N-linked (GlcNAc...) asparagine glycosylation is found at Asn197, Asn212, and Asn232. Catalysis depends on residues Asp233 and His289.

It belongs to the palmitoyl-protein thioesterase family. Interacts with CLN5, ATP5F1A and ATP5F1B. Post-translationally, glycosylated.

The protein resides in the lysosome. The protein localises to the secreted. It is found in the golgi apparatus. It localises to the endoplasmic reticulum. The enzyme catalyses S-hexadecanoyl-L-cysteinyl-[protein] + H2O = L-cysteinyl-[protein] + hexadecanoate + H(+). It catalyses the reaction hexadecanoyl-CoA + H2O = hexadecanoate + CoA + H(+). It carries out the reaction S-hexadecanoyl-N-acetylcysteamine + H2O = N-acetylcysteamine + hexadecanoate + H(+). The catalysed reaction is S-hexadecanoyl-N-acetylcysteine methyl ester + H2O = N-acetylcysteine methyl ester + hexadecanoate + H(+). With respect to regulation, palmitoylation reduces PPT1 enzymatic activity. In terms of biological role, has thioesterase activity against fatty acid thioesters with 14 -18 carbons, including palmitoyl-CoA, S-palmitoyl-N-acetylcysteamine, and palmitoylated proteins. In contrast to PPT2, PPT1 can hydrolyze palmitoylated proteins and palmitoylcysteine. The polypeptide is Palmitoyl-protein thioesterase 1 (PPT1) (Macaca fascicularis (Crab-eating macaque)).